The following is a 429-amino-acid chain: Adenylosuccinate synthetase (429 aa).

GTP-binding positions include 12 to 18 and 40 to 42; these read GDEGKGK and GHT. Asp13 serves as the catalytic Proton acceptor. Mg(2+)-binding residues include Asp13 and Gly40. IMP is bound by residues 13-16, 38-41, Thr129, Arg143, Gln224, Thr239, and Arg303; these read DEGK and NAGH. Catalysis depends on His41, which acts as the Proton donor. 299 to 305 contributes to the substrate binding site; sequence ATTGRRR. Residues Arg305, 331–333, and 413–415 each bind GTP; these read KLD and SVG.

Belongs to the adenylosuccinate synthetase family. Homodimer. It depends on Mg(2+) as a cofactor.

The protein resides in the cytoplasm. The catalysed reaction is IMP + L-aspartate + GTP = N(6)-(1,2-dicarboxyethyl)-AMP + GDP + phosphate + 2 H(+). The protein operates within purine metabolism; AMP biosynthesis via de novo pathway; AMP from IMP: step 1/2. Functionally, plays an important role in the de novo pathway of purine nucleotide biosynthesis. Catalyzes the first committed step in the biosynthesis of AMP from IMP. The protein is Adenylosuccinate synthetase of Desulforapulum autotrophicum (strain ATCC 43914 / DSM 3382 / VKM B-1955 / HRM2) (Desulfobacterium autotrophicum).